Here is a 159-residue protein sequence, read N- to C-terminus: Mesogenin-1 (159 aa).

Residues 79-101 (PGQARLPKGTKVRMSAQRRRKAS) form a disordered region. Positions 86–100 (KGTKVRMSAQRRRKA) are enriched in basic residues. Residues 95–149 (QRRRKASEREKLRMRTLADALHTLRNYLPPAYSQRGQPLTKIQTLKCTIKYISEL) enclose the bHLH domain.

It localises to the nucleus. Involved in specifying the paraxial, but not dorsal, mesoderm. May regulate the expression of T-box transcription factors required for mesoderm formation and differentiation. The chain is Mesogenin-1 (MSGN1) from Gallus gallus (Chicken).